A 199-amino-acid chain; its full sequence is Probable nicotinate-nucleotide adenylyltransferase (199 aa).

It belongs to the NadD family.

It catalyses the reaction nicotinate beta-D-ribonucleotide + ATP + H(+) = deamido-NAD(+) + diphosphate. It functions in the pathway cofactor biosynthesis; NAD(+) biosynthesis; deamido-NAD(+) from nicotinate D-ribonucleotide: step 1/1. Its function is as follows. Catalyzes the reversible adenylation of nicotinate mononucleotide (NaMN) to nicotinic acid adenine dinucleotide (NaAD). The chain is Probable nicotinate-nucleotide adenylyltransferase from Corynebacterium jeikeium (strain K411).